Here is a 688-residue protein sequence, read N- to C-terminus: Sodium channel and clathrin linker 1 (688 aa).

A2 is subject to N-acetylalanine. Residues 59–673 are a coiled coil; that stretch reads LIAEYEKHLE…SASQQLSVIT (615 aa). Residue S681 is modified to Phosphoserine.

As to quaternary structure, interacts with SCN10A and clathrin. Identified in a complex containing SCN10A, clathrin and SCLT1. In terms of tissue distribution, detected in small neurons in dorsal root ganglia. Detected in C-type fibers of sciatic nerve (at protein level).

Its subcellular location is the cytoplasm. It localises to the cytoskeleton. The protein resides in the microtubule organizing center. The protein localises to the centrosome. It is found in the centriole. Its function is as follows. Adapter protein that links SCN10A to clathrin. Regulates SCN10A channel activity, possibly by promoting channel internalization. This chain is Sodium channel and clathrin linker 1 (Sclt1), found in Rattus norvegicus (Rat).